Reading from the N-terminus, the 423-residue chain is D-tagatose-1,6-bisphosphate aldolase subunit GatZ (423 aa).

This sequence belongs to the GatZ/KbaZ family. GatZ subfamily. Forms a complex with GatY.

It functions in the pathway carbohydrate metabolism; D-tagatose 6-phosphate degradation; D-glyceraldehyde 3-phosphate and glycerone phosphate from D-tagatose 6-phosphate: step 2/2. Component of the tagatose-1,6-bisphosphate aldolase GatYZ that is required for full activity and stability of the Y subunit. Could have a chaperone-like function for the proper and stable folding of GatY. When expressed alone, GatZ does not show any aldolase activity. Is involved in the catabolism of galactitol. The sequence is that of D-tagatose-1,6-bisphosphate aldolase subunit GatZ from Salmonella agona (strain SL483).